A 284-amino-acid chain; its full sequence is Bifunctional protein FolD (284 aa).

166-168 (GAS) contacts NADP(+).

The protein belongs to the tetrahydrofolate dehydrogenase/cyclohydrolase family. Homodimer.

It catalyses the reaction (6R)-5,10-methylene-5,6,7,8-tetrahydrofolate + NADP(+) = (6R)-5,10-methenyltetrahydrofolate + NADPH. The catalysed reaction is (6R)-5,10-methenyltetrahydrofolate + H2O = (6R)-10-formyltetrahydrofolate + H(+). It functions in the pathway one-carbon metabolism; tetrahydrofolate interconversion. In terms of biological role, catalyzes the oxidation of 5,10-methylenetetrahydrofolate to 5,10-methenyltetrahydrofolate and then the hydrolysis of 5,10-methenyltetrahydrofolate to 10-formyltetrahydrofolate. This Nitrosococcus oceani (strain ATCC 19707 / BCRC 17464 / JCM 30415 / NCIMB 11848 / C-107) protein is Bifunctional protein FolD.